The chain runs to 106 residues: MPAFAIYFLAALAEIAGCFTFWAWLRLGKSGLWLLPGMASLAIFAWLLTMVDTPAAGRAYAAYGGIYIIASLCWLWVAEGARPDRWDMTGAAVALAGSAIILAGPR.

Transmembrane regions (helical) follow at residues 4–24 (FAIYFLAALAEIAGCFTFWAW), 31–51 (GLWLLPGMASLAIFAWLLTMV), and 61–81 (AAYGGIYIIASLCWLWVAEGA).

This sequence belongs to the UPF0060 family.

The protein resides in the cell inner membrane. In Sinorhizobium medicae (strain WSM419) (Ensifer medicae), this protein is UPF0060 membrane protein Smed_0659.